Reading from the N-terminus, the 37-residue chain is Large ribosomal subunit protein bL36 (37 aa).

This sequence belongs to the bacterial ribosomal protein bL36 family.

The protein is Large ribosomal subunit protein bL36 of Desulforamulus reducens (strain ATCC BAA-1160 / DSM 100696 / MI-1) (Desulfotomaculum reducens).